The sequence spans 701 residues: Ribosomal RNA large subunit methyltransferase K/L (701 aa).

The THUMP domain occupies Leu43–Leu154.

It belongs to the methyltransferase superfamily. RlmKL family.

It is found in the cytoplasm. The enzyme catalyses guanosine(2445) in 23S rRNA + S-adenosyl-L-methionine = N(2)-methylguanosine(2445) in 23S rRNA + S-adenosyl-L-homocysteine + H(+). It carries out the reaction guanosine(2069) in 23S rRNA + S-adenosyl-L-methionine = N(2)-methylguanosine(2069) in 23S rRNA + S-adenosyl-L-homocysteine + H(+). Its function is as follows. Specifically methylates the guanine in position 2445 (m2G2445) and the guanine in position 2069 (m7G2069) of 23S rRNA. The chain is Ribosomal RNA large subunit methyltransferase K/L from Klebsiella pneumoniae (strain 342).